Here is a 484-residue protein sequence, read N- to C-terminus: Probable chitinase 2 (484 aa).

The N-terminal stretch at methionine 1–alanine 33 is a signal peptide. In terms of domain architecture, GH18 spans lysine 41–alanine 432. Cysteines 45 and 70 form a disulfide. Residues glutamate 98–glutamate 99 and glycine 125–asparagine 128 each bind chitin. Glutamate 168 serves as the catalytic Proton donor. Chitin is bound by residues tyrosine 169, methionine 231–aspartate 234, and tryptophan 384. Serine 467 carries the phosphoserine modification.

Belongs to the glycosyl hydrolase 18 family. Chitinase class II subfamily.

It catalyses the reaction Random endo-hydrolysis of N-acetyl-beta-D-glucosaminide (1-&gt;4)-beta-linkages in chitin and chitodextrins.. In Drosophila melanogaster (Fruit fly), this protein is Probable chitinase 2.